Here is a 37-residue protein sequence, read N- to C-terminus: Photosystem I reaction center subunit VIII (37 aa).

Residues 10–30 traverse the membrane as a helical segment; sequence IFVPLVGLVFPAIAMASLSLY.

The protein belongs to the PsaI family.

It localises to the plastid. Its subcellular location is the chloroplast thylakoid membrane. In terms of biological role, may help in the organization of the PsaL subunit. The protein is Photosystem I reaction center subunit VIII of Gossypium hirsutum (Upland cotton).